The sequence spans 95 residues: Aspartyl/glutamyl-tRNA(Asn/Gln) amidotransferase subunit C (95 aa).

This sequence belongs to the GatC family. In terms of assembly, heterotrimer of A, B and C subunits.

It catalyses the reaction L-glutamyl-tRNA(Gln) + L-glutamine + ATP + H2O = L-glutaminyl-tRNA(Gln) + L-glutamate + ADP + phosphate + H(+). The catalysed reaction is L-aspartyl-tRNA(Asn) + L-glutamine + ATP + H2O = L-asparaginyl-tRNA(Asn) + L-glutamate + ADP + phosphate + 2 H(+). Functionally, allows the formation of correctly charged Asn-tRNA(Asn) or Gln-tRNA(Gln) through the transamidation of misacylated Asp-tRNA(Asn) or Glu-tRNA(Gln) in organisms which lack either or both of asparaginyl-tRNA or glutaminyl-tRNA synthetases. The reaction takes place in the presence of glutamine and ATP through an activated phospho-Asp-tRNA(Asn) or phospho-Glu-tRNA(Gln). The polypeptide is Aspartyl/glutamyl-tRNA(Asn/Gln) amidotransferase subunit C (Prochlorococcus marinus (strain NATL1A)).